The following is a 257-amino-acid chain: Diphthine synthase (257 aa).

S-adenosyl-L-methionine contacts are provided by residues I11, D89, I92, 117 to 118, L169, L210, and H235; that span reads SV.

This sequence belongs to the diphthine synthase family. Homodimer.

The catalysed reaction is 2-[(3S)-amino-3-carboxypropyl]-L-histidyl-[translation elongation factor 2] + 3 S-adenosyl-L-methionine = diphthine-[translation elongation factor 2] + 3 S-adenosyl-L-homocysteine + 3 H(+). It functions in the pathway protein modification; peptidyl-diphthamide biosynthesis. Functionally, S-adenosyl-L-methionine-dependent methyltransferase that catalyzes the trimethylation of the amino group of the modified target histidine residue in translation elongation factor 2 (EF-2), to form an intermediate called diphthine. The three successive methylation reactions represent the second step of diphthamide biosynthesis. The chain is Diphthine synthase from Saccharolobus islandicus (strain L.S.2.15 / Lassen #1) (Sulfolobus islandicus).